The chain runs to 204 residues: LexA repressor (204 aa).

Positions 28–48 (RAEIAQELGFKSPNAAEEHLK) form a DNA-binding region, H-T-H motif. Catalysis depends on for autocatalytic cleavage activity residues Ser125 and Lys162.

The protein belongs to the peptidase S24 family. Homodimer.

The catalysed reaction is Hydrolysis of Ala-|-Gly bond in repressor LexA.. Functionally, represses a number of genes involved in the response to DNA damage (SOS response), including recA and lexA. In the presence of single-stranded DNA, RecA interacts with LexA causing an autocatalytic cleavage which disrupts the DNA-binding part of LexA, leading to derepression of the SOS regulon and eventually DNA repair. This is LexA repressor from Ectopseudomonas mendocina (strain ymp) (Pseudomonas mendocina).